The primary structure comprises 343 residues: Dihydroorotase (343 aa).

Zn(2+) contacts are provided by His13 and His15. Residues 15–17 and Asn41 each bind substrate; that span reads HLR. The Zn(2+) site is built by Lys99, His136, and His174. Lys99 bears the N6-carboxylysine mark. Position 136 (His136) interacts with substrate. Leu219 is a substrate binding site. A Zn(2+)-binding site is contributed by Asp247. Asp247 is a catalytic residue. Substrate is bound by residues His251 and Ala263.

The protein belongs to the metallo-dependent hydrolases superfamily. DHOase family. Class II DHOase subfamily. As to quaternary structure, homodimer. It depends on Zn(2+) as a cofactor.

The enzyme catalyses (S)-dihydroorotate + H2O = N-carbamoyl-L-aspartate + H(+). Its pathway is pyrimidine metabolism; UMP biosynthesis via de novo pathway; (S)-dihydroorotate from bicarbonate: step 3/3. In terms of biological role, catalyzes the reversible cyclization of carbamoyl aspartate to dihydroorotate. The chain is Dihydroorotase from Shewanella sp. (strain ANA-3).